Reading from the N-terminus, the 886-residue chain is CRM-domain containing factor CFM3, chloroplastic/mitochondrial (886 aa).

A chloroplast and mitochondrion-targeting transit peptide spans 1 to 70 (MAAAAMAISP…LDLRPEPSPS (70 aa)). 2 disordered regions span residues 56–84 (RPAS…TSRS) and 269–291 (TKGT…PPGH). CRM domains lie at 174–270 (LTLP…EPTK), 378–475 (PSLS…ELAE), and 590–690 (ETIT…SKLR). Positions 270-281 (KGTSKNTQTLGM) are enriched in polar residues. The tract at residues 771-886 (SFDNSVAVQN…QSTELTNTCS (116 aa)) is disordered. Acidic residues predominate over residues 793–827 (NSDDEGDYSDEDDDEDDDNDEEDGFDYENDDEDDV). 2 stretches are compositionally biased toward polar residues: residues 841-852 (DFGSSDSENYVS) and 869-886 (DSRN…NTCS).

As to quaternary structure, interacts with RNA. Part of large ribonucleo-protein particles that contain CAF1 and/or CAF2, and RNC1.

It localises to the plastid. The protein localises to the chloroplast. The protein resides in the mitochondrion. Binds specific group II introns in chloroplasts and facilitates their splicing. Acts on subgroup IIB introns. The substrates of the subgroup IIB also require the CRM domain proteins CAF1 or CAF2, with a simultaneous binding of CFM3 and CAF1 or CAF2. May influence the biogenesis of the mitochondrial small ribosomal subunit. The protein is CRM-domain containing factor CFM3, chloroplastic/mitochondrial of Oryza sativa subsp. japonica (Rice).